Here is a 638-residue protein sequence, read N- to C-terminus: Chaperone protein DnaK (638 aa).

Threonine 198 bears the Phosphothreonine; by autocatalysis mark. Residues 602-638 (QAKSQAQGGEEAQAKDAGQSNDDVVDAEFEEVKDDKK) are disordered. Residues 624-638 (DVVDAEFEEVKDDKK) show a composition bias toward acidic residues.

This sequence belongs to the heat shock protein 70 family.

In terms of biological role, acts as a chaperone. This chain is Chaperone protein DnaK, found in Shewanella denitrificans (strain OS217 / ATCC BAA-1090 / DSM 15013).